A 508-amino-acid polypeptide reads, in one-letter code: Fc receptor-like protein 2 (508 aa).

An N-terminal signal peptide occupies residues 1–19 (MLLWSLLVIFDAVTEQADS). Ig-like C2-type domains are found at residues 20-98 (LTLV…SNIV), 109-187 (PVLT…HRIR), 201-290 (PISN…KVVN), and 300-387 (PVLT…VSIS). Over 20–401 (LTLVAPSSVF…YRRDLMTAGV (382 aa)) the chain is Extracellular. C128 and C177 are disulfide-bonded. N-linked (GlcNAc...) asparagine glycosylation is found at N204, N234, N343, N355, and N365. Intrachain disulfides connect C226-C275 and C321-C368. A helical transmembrane segment spans residues 402–422 (LWGLFGVLGFTGVALLLYALF). Topologically, residues 423 to 508 (HKISGESSAT…QVIYSSVKKS (86 aa)) are cytoplasmic. A disordered region spans residues 429 to 453 (SSATNEPRGASRPNPQEFTYSSPTP). The segment covering 441–452 (PNPQEFTYSSPT) has biased composition (polar residues). Short sequence motifs (ITIM motif) lie at residues 446 to 451 (FTYSSP), 460 to 465 (PVYVNV), 472 to 477 (VVYSQV), and 500 to 505 (VIYSSV).

The tyrosine-phosphorylated isoform 2 interacts with PTPN6. Isoform 2 is N- and O-glycosylated, and phosphorylated. Expressed in the secondary lymphoid organs, spleen and lymph node. Expression is limited to the mature B-cell lines. Highly expressed in CD19 and within the mantle zones of the tonsil tissue. Isoform 2 is expressed in the spleen, peripheral blood and bone marrow. Isoform 2 and isoform 4 are expressed in B-cell lines. Preferentially expressed in memory B-cells (at protein level).

The protein localises to the cell membrane. May have an regulatory role in normal and neoplastic B cell development. The sequence is that of Fc receptor-like protein 2 (FCRL2) from Homo sapiens (Human).